Here is a 364-residue protein sequence, read N- to C-terminus: Threonine-phosphate decarboxylase (364 aa).

O-phospho-L-threonine contacts are provided by residues 8-9 (HG), N32, and N157. Residue K216 is modified to N6-(pyridoxal phosphate)lysine. The O-phospho-L-threonine site is built by R323 and R337.

The protein belongs to the class-II pyridoxal-phosphate-dependent aminotransferase family. Homodimer. It depends on pyridoxal 5'-phosphate as a cofactor.

The enzyme catalyses O-phospho-L-threonine + H(+) = (R)-1-aminopropan-2-yl phosphate + CO2. Its pathway is cofactor biosynthesis; adenosylcobalamin biosynthesis. Decarboxylates L-threonine-O-3-phosphate to yield (R)-1-amino-2-propanol O-2-phosphate, the precursor for the linkage between the nucleotide loop and the corrin ring in cobalamin. The chain is Threonine-phosphate decarboxylase (cobD) from Salmonella typhimurium (strain LT2 / SGSC1412 / ATCC 700720).